Here is a 796-residue protein sequence, read N- to C-terminus: Cadherin-11 (796 aa).

Residues 1–24 form the signal peptide; it reads MKENYCLQAALVCLSMLYHSQAFA. The propeptide occupies 25–53; sequence LERRSHLHPSFHGHHEKGKEGQVLQRSKR. Cadherin domains lie at 54–159, 160–268, 269–383, 384–486, and 487–612; these read GWVW…PPEF, LHEI…PPKF, PQSV…PPMF, LAPS…DNAP, and KFAA…YILN. At 54 to 617 the chain is on the extracellular side; that stretch reads GWVWNQFFVI…AYILNAGLST (564 aa). Residues Asn-455 and Asn-540 are each glycosylated (N-linked (GlcNAc...) asparagine). The chain crosses the membrane as a helical span at residues 618–640; it reads GALIAILACIVILLVIVVLFVTL. Residues 641-796 are Cytoplasmic-facing; it reads RRQKKEPLIV…GSKDTFDDDS (156 aa). Position 788 is a phosphoserine (Ser-788). The residue at position 791 (Thr-791) is a Phosphothreonine.

In terms of assembly, interacts with PCDH8. In terms of tissue distribution, selectively expressed in osteoblastic cell lines, precursor cell lines of osteoblasts, and primary osteoblastic cells from calvaria, as well as in lung, testis, and brain tissues at low levels.

Its subcellular location is the cell membrane. Functionally, cadherins are calcium-dependent cell adhesion proteins. They preferentially interact with themselves in a homophilic manner in connecting cells; cadherins may thus contribute to the sorting of heterogeneous cell types. Required for proper focal adhesion assembly. Involved in the regulation of cell migration. The sequence is that of Cadherin-11 (Cdh11) from Mus musculus (Mouse).